The chain runs to 369 residues: Cobalt-precorrin-5B C(1)-methyltransferase (369 aa).

Belongs to the CbiD family.

The enzyme catalyses Co-precorrin-5B + S-adenosyl-L-methionine = Co-precorrin-6A + S-adenosyl-L-homocysteine. It participates in cofactor biosynthesis; adenosylcobalamin biosynthesis; cob(II)yrinate a,c-diamide from sirohydrochlorin (anaerobic route): step 6/10. In terms of biological role, catalyzes the methylation of C-1 in cobalt-precorrin-5B to form cobalt-precorrin-6A. This chain is Cobalt-precorrin-5B C(1)-methyltransferase, found in Prosthecochloris aestuarii (strain DSM 271 / SK 413).